Consider the following 118-residue polypeptide: Large ribosomal subunit protein uL18 (118 aa).

This sequence belongs to the universal ribosomal protein uL18 family. In terms of assembly, part of the 50S ribosomal subunit; part of the 5S rRNA/L5/L18/L25 subcomplex. Contacts the 5S and 23S rRNAs.

In terms of biological role, this is one of the proteins that bind and probably mediate the attachment of the 5S RNA into the large ribosomal subunit, where it forms part of the central protuberance. The polypeptide is Large ribosomal subunit protein uL18 (Campylobacter jejuni subsp. doylei (strain ATCC BAA-1458 / RM4099 / 269.97)).